We begin with the raw amino-acid sequence, 291 residues long: Oxidative stress-responsive serine-rich protein 1 (291 aa).

The interval E48–A174 is disordered. The segment covering S65 to K83 has biased composition (basic residues). The span at E132–T142 shows a compositional bias: polar residues. Residues T142 and T232 each carry the phosphothreonine modification.

The protein is Oxidative stress-responsive serine-rich protein 1 (OSER1) of Bos taurus (Bovine).